A 561-amino-acid polypeptide reads, in one-letter code: Arginine--tRNA ligase (561 aa).

The short motif at 128–138 is the 'HIGH' region element; it reads ANPTGPLHVGH.

Belongs to the class-I aminoacyl-tRNA synthetase family. In terms of assembly, monomer.

Its subcellular location is the cytoplasm. It catalyses the reaction tRNA(Arg) + L-arginine + ATP = L-arginyl-tRNA(Arg) + AMP + diphosphate. This chain is Arginine--tRNA ligase, found in Chromohalobacter salexigens (strain ATCC BAA-138 / DSM 3043 / CIP 106854 / NCIMB 13768 / 1H11).